Here is a 178-residue protein sequence, read N- to C-terminus: MSRIGKRIIEIPSSVQASVEGSKLLFKNGKEKHELETHNRVKITLENNQLSFQPVGEDAQSRAYWGTYGALANNIVIGLSTGFSKILEVNGVGYKVALGNKTLDLSLGFSHPVKYPIPAGIEMVVEKNTITIKGSDKQKVGQVAAEIRSFRPPEPYKGKGVKYSDEVIIRKAGKTAKK.

Belongs to the universal ribosomal protein uL6 family. In terms of assembly, part of the 50S ribosomal subunit.

Its function is as follows. This protein binds to the 23S rRNA, and is important in its secondary structure. It is located near the subunit interface in the base of the L7/L12 stalk, and near the tRNA binding site of the peptidyltransferase center. The chain is Large ribosomal subunit protein uL6 from Helicobacter pylori (strain HPAG1).